The primary structure comprises 61 residues: Conotoxin TxMRCL-04 (61 aa).

A signal peptide spans 1–22 (MRCLPVFVILLLLIASTPSVDA). Positions 23-46 (QLKTKDDMSLASFHDNVKRILQIR) are excised as a propeptide.

It belongs to the conotoxin T superfamily. In terms of processing, contains 2 disulfide bonds that can be either 'C1-C3, C2-C4' or 'C1-C4, C2-C3', since these disulfide connectivities have been observed for conotoxins with cysteine framework V (for examples, see AC P0DQQ7 and AC P81755). As to expression, expressed by the venom duct.

The protein localises to the secreted. This Conus textile (Cloth-of-gold cone) protein is Conotoxin TxMRCL-04.